Here is a 281-residue protein sequence, read N- to C-terminus: NAC domain-containing protein 6 (281 aa).

The NAC domain occupies 4 to 156; that stretch reads LPVGSRFCPT…QDALTGFADQ (153 aa). 2 disordered regions span residues 84 to 109 and 211 to 249; these read GGSE…QKGD and LEGH…VTQE. Residues 94–109 are compositionally biased toward basic and acidic residues; sequence NDGKKEIKDGHMQKGD. The DNA-binding element occupies 109 to 162; that stretch reads DGLRASDDLQKVVLCRIRYKKEANVNEFGLVNHQAHQTQDALTGFADQLEMMLE. Low complexity predominate over residues 229 to 239; sequence QQQQQQQQQQQ.

The protein localises to the nucleus. The polypeptide is NAC domain-containing protein 6 (NAC006) (Arabidopsis thaliana (Mouse-ear cress)).